The following is a 248-amino-acid chain: 3-deoxy-manno-octulosonate cytidylyltransferase (248 aa).

This sequence belongs to the KdsB family.

Its subcellular location is the cytoplasm. The catalysed reaction is 3-deoxy-alpha-D-manno-oct-2-ulosonate + CTP = CMP-3-deoxy-beta-D-manno-octulosonate + diphosphate. The protein operates within nucleotide-sugar biosynthesis; CMP-3-deoxy-D-manno-octulosonate biosynthesis; CMP-3-deoxy-D-manno-octulosonate from 3-deoxy-D-manno-octulosonate and CTP: step 1/1. Its pathway is bacterial outer membrane biogenesis; lipopolysaccharide biosynthesis. In terms of biological role, activates KDO (a required 8-carbon sugar) for incorporation into bacterial lipopolysaccharide in Gram-negative bacteria. The polypeptide is 3-deoxy-manno-octulosonate cytidylyltransferase (Erwinia tasmaniensis (strain DSM 17950 / CFBP 7177 / CIP 109463 / NCPPB 4357 / Et1/99)).